Consider the following 151-residue polypeptide: Sec-independent protein translocase protein TatB (151 aa).

The chain crosses the membrane as a helical span at residues Met-1–Gly-21. The segment covering Asn-120–Glu-131 has biased composition (low complexity). A disordered region spans residues Asn-120–Ala-151. Residues Gln-132–Leu-142 show a composition bias toward polar residues.

This sequence belongs to the TatB family. In terms of assembly, the Tat system comprises two distinct complexes: a TatABC complex, containing multiple copies of TatA, TatB and TatC subunits, and a separate TatA complex, containing only TatA subunits. Substrates initially bind to the TatABC complex, which probably triggers association of the separate TatA complex to form the active translocon.

The protein resides in the cell inner membrane. Its function is as follows. Part of the twin-arginine translocation (Tat) system that transports large folded proteins containing a characteristic twin-arginine motif in their signal peptide across membranes. Together with TatC, TatB is part of a receptor directly interacting with Tat signal peptides. TatB may form an oligomeric binding site that transiently accommodates folded Tat precursor proteins before their translocation. In Campylobacter fetus subsp. fetus (strain 82-40), this protein is Sec-independent protein translocase protein TatB.